We begin with the raw amino-acid sequence, 619 residues long: Guanylate cyclase soluble subunit beta-1 (619 aa).

Residue His105 coordinates heme. A Guanylate cyclase domain is found at 421–554 (TILFSGIVGF…NTVNLTSRTE (134 aa)).

It belongs to the adenylyl cyclase class-4/guanylyl cyclase family. The active enzyme is formed by a heterodimer of an alpha and a beta subunit. Heterodimer with GUCY1A1. Can also form inactive homodimers in vitro. It depends on heme as a cofactor. As to expression, detected in brain cortex and cerebellum (at protein level).

It localises to the cytoplasm. The catalysed reaction is GTP = 3',5'-cyclic GMP + diphosphate. Activated by nitric oxide in the presence of magnesium or manganese ions. Functionally, mediates responses to nitric oxide (NO) by catalyzing the biosynthesis of the signaling molecule cGMP. This is Guanylate cyclase soluble subunit beta-1 from Homo sapiens (Human).